Here is a 47-residue protein sequence, read N- to C-terminus: Photosystem II reaction center protein Psb30 (47 aa).

A helical transmembrane segment spans residues 19–39; it reads VIFQLLSVALIVIAGPVVIFL.

This sequence belongs to the Psb30/Ycf12 family. As to quaternary structure, PSII is composed of 1 copy each of membrane proteins PsbA, PsbB, PsbC, PsbD, PsbE, PsbF, PsbH, PsbI, PsbJ, PsbK, PsbL, PsbM, PsbT, PsbX, PsbY, PsbZ, Psb30/Ycf12, peripheral proteins PsbO, CyanoQ (PsbQ), PsbU, PsbV and a large number of cofactors. It forms dimeric complexes.

The protein resides in the cellular thylakoid membrane. Functionally, a core subunit of photosystem II (PSII), probably helps stabilize the reaction center. The sequence is that of Photosystem II reaction center protein Psb30 from Nostoc punctiforme (strain ATCC 29133 / PCC 73102).